Here is a 1395-residue protein sequence, read N- to C-terminus: DNA-directed RNA polymerase subunit beta' (1395 aa).

Residues Cys-70, Cys-72, Cys-85, and Cys-88 each contribute to the Zn(2+) site. 3 residues coordinate Mg(2+): Asp-460, Asp-462, and Asp-464. Residues Cys-814, Cys-888, Cys-895, and Cys-898 each coordinate Zn(2+).

The protein belongs to the RNA polymerase beta' chain family. The RNAP catalytic core consists of 2 alpha, 1 beta, 1 beta' and 1 omega subunit. When a sigma factor is associated with the core the holoenzyme is formed, which can initiate transcription. It depends on Mg(2+) as a cofactor. Zn(2+) is required as a cofactor.

It carries out the reaction RNA(n) + a ribonucleoside 5'-triphosphate = RNA(n+1) + diphosphate. Functionally, DNA-dependent RNA polymerase catalyzes the transcription of DNA into RNA using the four ribonucleoside triphosphates as substrates. The sequence is that of DNA-directed RNA polymerase subunit beta' from Pseudoalteromonas atlantica (strain T6c / ATCC BAA-1087).